The sequence spans 542 residues: T-complex protein 1 subunit delta (542 aa).

Residues 1–16 (MPENVAPRTGPPAGAA) show a composition bias toward low complexity. Positions 1 to 31 (MPENVAPRTGPPAGAAGAAGGRGKSAYQDRD) are disordered. Arg22 bears the Omega-N-methylarginine mark. At Lys24 the chain carries N6-acetyllysine. A Phosphoserine modification is found at Ser39. Gly56 is a binding site for ADP. Residue Gly56 coordinates ATP. Asp107 is a Mg(2+) binding site. Residues Gly108, Thr109, Thr110, Ser111, Asn175, Ser176, and Lys177 each coordinate ADP. Gly108 and Thr109 together coordinate ATP. Residue Lys177 coordinates ATP. 2 positions are modified to phosphoserine: Ser187 and Ser205. N6-acetyllysine is present on residues Lys291, Lys305, Lys322, and Lys329. Residue Gly428 participates in ADP binding. Position 447 is a phosphoserine (Ser447). Position 513 (Gln513) interacts with ADP.

Belongs to the TCP-1 chaperonin family. As to quaternary structure, component of the chaperonin-containing T-complex (TRiC), a hexadecamer composed of two identical back-to-back stacked rings enclosing a protein folding chamber. Each ring is made up of eight different subunits: TCP1/CCT1, CCT2, CCT3, CCT4, CCT5, CCT6A/CCT6, CCT7, CCT8. Interacts with PACRG. Interacts with DNAAF4. Interacts with DLEC1.

Its subcellular location is the cytoplasm. The protein resides in the melanosome. It localises to the cytoskeleton. It is found in the microtubule organizing center. The protein localises to the centrosome. Its subcellular location is the cilium basal body. It catalyses the reaction ATP + H2O = ADP + phosphate + H(+). Component of the chaperonin-containing T-complex (TRiC), a molecular chaperone complex that assists the folding of actin, tubulin and other proteins upon ATP hydrolysis. The TRiC complex mediates the folding of WRAP53/TCAB1, thereby regulating telomere maintenance. As part of the TRiC complex may play a role in the assembly of BBSome, a complex involved in ciliogenesis regulating transports vesicles to the cilia. This chain is T-complex protein 1 subunit delta (CCT4), found in Bos taurus (Bovine).